The following is a 336-amino-acid chain: Biotin synthase (336 aa).

The 230-residue stretch at 57–286 folds into the Radical SAM core domain; it reads HHGKSIDLCS…RAIVRTAGGR (230 aa). [4Fe-4S] cluster is bound by residues C75, C79, and C82. Residues S119, C151, C211, and R281 each contribute to the [2Fe-2S] cluster site.

The protein belongs to the radical SAM superfamily. Biotin synthase family. In terms of assembly, homodimer. Requires [4Fe-4S] cluster as cofactor. [2Fe-2S] cluster serves as cofactor.

It catalyses the reaction (4R,5S)-dethiobiotin + (sulfur carrier)-SH + 2 reduced [2Fe-2S]-[ferredoxin] + 2 S-adenosyl-L-methionine = (sulfur carrier)-H + biotin + 2 5'-deoxyadenosine + 2 L-methionine + 2 oxidized [2Fe-2S]-[ferredoxin]. It participates in cofactor biosynthesis; biotin biosynthesis; biotin from 7,8-diaminononanoate: step 2/2. Functionally, catalyzes the conversion of dethiobiotin (DTB) to biotin by the insertion of a sulfur atom into dethiobiotin via a radical-based mechanism. The protein is Biotin synthase of Desulfotalea psychrophila (strain LSv54 / DSM 12343).